The primary structure comprises 252 residues: Indole-3-glycerol phosphate synthase (252 aa).

This sequence belongs to the TrpC family.

It carries out the reaction 1-(2-carboxyphenylamino)-1-deoxy-D-ribulose 5-phosphate + H(+) = (1S,2R)-1-C-(indol-3-yl)glycerol 3-phosphate + CO2 + H2O. It functions in the pathway amino-acid biosynthesis; L-tryptophan biosynthesis; L-tryptophan from chorismate: step 4/5. The protein is Indole-3-glycerol phosphate synthase of Listeria welshimeri serovar 6b (strain ATCC 35897 / DSM 20650 / CCUG 15529 / CIP 8149 / NCTC 11857 / SLCC 5334 / V8).